An 809-amino-acid polypeptide reads, in one-letter code: ATP-dependent RNA helicase HrpB (809 aa).

Positions 14 to 177 (LTALDCAPQV…LPEAPVVISE (164 aa)) constitute a Helicase ATP-binding domain. Residue 27–34 (APTGAGKS) participates in ATP binding. A DEFH box motif is present at residues 123-126 (DEFH). Positions 195–368 (RFDDAVAVAT…GLLMELLQWG (174 aa)) constitute a Helicase C-terminal domain. Positions 788–809 (PKHVWPDDPANTAPTRRTKKYS) are disordered.

The protein belongs to the DEAD box helicase family.

The catalysed reaction is ATP + H2O = ADP + phosphate + H(+). This Escherichia coli (strain K12) protein is ATP-dependent RNA helicase HrpB (hrpB).